Consider the following 172-residue polypeptide: Disulfide bond formation protein B (172 aa).

The Cytoplasmic segment spans residues 1–13; the sequence is MNWLAQLPTQRTP. Residues 14 to 30 traverse the membrane as a helical segment; sequence WLLFSGIVFLLEITALF. Residues 31 to 48 are Periplasmic-facing; the sequence is FQYKMGLAPCIMCIYQRT. Cysteines 40 and 43 form a disulfide. The helical transmembrane segment at 49–64 threads the bilayer; that stretch reads AVLGLLIAGIIGTSNP. Residues 65–71 are Cytoplasmic-facing; the sequence is EHRGVRL. The chain crosses the membrane as a helical span at residues 72 to 89; it reads LAYSVWAVSSVWGFIIAR. At 90–145 the chain is on the periplasmic side; the sequence is EHIEMQTTTDPFAFSCEFEPNFPAFMPLHEWIPSFFAATGDCGNIDWQFAGLSMPA. An intrachain disulfide couples cysteine 105 to cysteine 131. Residues 146 to 164 traverse the membrane as a helical segment; sequence WMEVIFALFAATLFLLVTS. At 165 to 172 the chain is on the cytoplasmic side; sequence RLMTKRSL.

It belongs to the DsbB family.

It is found in the cell inner membrane. Its function is as follows. Required for disulfide bond formation in some periplasmic proteins. Acts by oxidizing the DsbA protein. This is Disulfide bond formation protein B from Pseudoalteromonas translucida (strain TAC 125).